The following is a 346-amino-acid chain: uncharacterized protein (346 aa).

This is an uncharacterized protein from Schizosaccharomyces pombe (strain 972 / ATCC 24843) (Fission yeast).